Consider the following 492-residue polypeptide: Probable glycine dehydrogenase (decarboxylating) subunit 2 (492 aa).

Residue lysine 274 is modified to N6-(pyridoxal phosphate)lysine.

It belongs to the GcvP family. C-terminal subunit subfamily. As to quaternary structure, the glycine cleavage system is composed of four proteins: P, T, L and H. In this organism, the P 'protein' is a heterodimer of two subunits. Pyridoxal 5'-phosphate serves as cofactor.

The enzyme catalyses N(6)-[(R)-lipoyl]-L-lysyl-[glycine-cleavage complex H protein] + glycine + H(+) = N(6)-[(R)-S(8)-aminomethyldihydrolipoyl]-L-lysyl-[glycine-cleavage complex H protein] + CO2. The glycine cleavage system catalyzes the degradation of glycine. The P protein binds the alpha-amino group of glycine through its pyridoxal phosphate cofactor; CO(2) is released and the remaining methylamine moiety is then transferred to the lipoamide cofactor of the H protein. In Exiguobacterium sibiricum (strain DSM 17290 / CCUG 55495 / CIP 109462 / JCM 13490 / 255-15), this protein is Probable glycine dehydrogenase (decarboxylating) subunit 2.